A 764-amino-acid polypeptide reads, in one-letter code: Protective antigen (764 aa).

The N-terminal stretch at 1–29 is a signal peptide; it reads MKKRKVLIPLMALSTILVSSTGNLEVIQA. The interval 30–287 is domain 1, calcium-binding; LF and EF binding sites; the sequence is EVKQENRLLN…PEARHPLVAA (258 aa). In terms of domain architecture, PA14 spans 43–179; the sequence is SSSQGLLGYY…NKKEVISSDN (137 aa). The interval 176–214 is disordered; that stretch reads SSDNLQLPELKQKSSNSRKKRSTSAGPTVPDRDNDGIPD. D206, D208, D210, I212, and E217 together coordinate Ca(2+). An alpha-clamp region spans residues 231 to 239; the sequence is FLSPWISNI. Residues S251, K254, and D264 each coordinate Ca(2+). The interval 288 to 516 is domain 2, membrane insertion and heptamerization; the sequence is YPIVHVDMEN…SEVLPQIQET (229 aa). Residues 302–333 form a disordered region; the sequence is KNEDQSTQNTDSQTRTISKNTSTSRTHTSEVH. Residues 306–327 are compositionally biased toward polar residues; the sequence is QSTQNTDSQTRTISKNTSTSRT. 2 beta stranded membrane passes run 331–342 and 345–354; these read EVHGNAEVHASF and IGGSVSAGFS. A domain 3, heptamerization region spans residues 517-624; sequence TARIIFNGKD…KMNILIRDKR (108 aa). The segment at 625 to 764 is domain 4, binding to the receptor; that stretch reads FHYDRNNIAV…IFSKKGYEIG (140 aa).

It belongs to the bacterial binary toxin family. Interacts with host ANTXR1 and ANTXR2. As to quaternary structure, homooligomer; homooligomerizes to form homoheptamers (PA-63(7)) or homooctamers (PA-63(8)). PA-63(7) or PA-63(8) form ring-shaped oligomers that are in a pre-pore conformation, which do not penetrate the host membrane. PA-63(8) displays an enhanced stability, suggesting that this form circulates in the blood to reach and exert toxicity even in distant tissues. Interacts with lethal factor (LF) and edema factor (EF); can bind LF and EF simultaneously and interaction takes place following homooligomerization on the host cell membrane. PA-63(7) homoheptamer interacts with three molecules of LF to form the PA(7)LF(3) complex, in which the relative position of the N-terminal alpha-helices in the three LFs determines which factor is translocated first. In terms of processing, proteolytic activation by FURIN cleaves the protein in two parts, PA-20 and PA-63; the latter is the mature protein. The cleavage occurs at the cell surface and probably in the serum of infected animals as well; both native and cleaved PA are able to bind to the cell receptor. The release of PA-20 from the remaining receptor-bound PA-63 exposes the binding site for EF and LF, and promotes oligomerization and internalization of the protein.

Its subcellular location is the secreted. It localises to the host cell membrane. It is found in the host endosome membrane. In terms of biological role, protective antigen constitutes one of the three proteins composing the anthrax toxin; it mediates attachment to host cells and translocation of edema factor (EF) and lethal factor (LF) into the host cytoplasm. PA associated with LF forms the lethal toxin (LeTx) and causes death when injected; PA associated with EF forms the edema toxin (EdTx) and produces edema. PA induces immunity to infection with anthrax. Mediates the attachment to host cells by binding host cell receptors ANTXR1 and ANTXR2. Following host cell surface attachment, PA is cleaved by FURIN to generate the PA-63 (Protective antigen PA-63) form, which constitutes the mature form of the protein that oligomerizes and forms a pore to translocate the enzymatic toxin components edema factor (EF) and lethal factor (LF) into the host cytosol. Its function is as follows. Mature form that oligomerizes and forms a pore to translocate the enzymatic toxin components edema factor (EF) and lethal factor (LF) into the host cytosol. Following attachment to host cell receptors and cleavage by FURIN, homooligomerizes to form ring-shaped oligomers that are in a pre-pore conformation, and associates with EF and LF. Toxin-leaded complexes are then endocytosed in a clathrin-dependent process, followed by a conformational change of oligomerized PA-63 from the pre-pore to pore state, which is triggered by the low pH in the endosome. Once active, the pore mediates unfolding of EF and LF, which pass through the pore and translocate into the host cytosol. The chain is Protective antigen (pagA) from Bacillus anthracis.